The primary structure comprises 226 residues: Protein DVU_0532 (226 aa).

Transmembrane regions (helical) follow at residues methionine 1–alanine 23, alanine 46–leucine 57, phenylalanine 73–leucine 99, methionine 112–leucine 131, isoleucine 141–alanine 164, and leucine 194–proline 222.

It depends on heme b as a cofactor.

The protein resides in the cell membrane. HMWC (high-molecular-weight cytochrome c), ORF2, ORF3, ORF4, ORF5 and ORF6 in the HMC operon form a transmembrane protein complex that allows electron flow from the periplasmic hydrogenase to the cytoplasmic enzymes that catalyze reduction of sulfates. The protein is Protein DVU_0532 of Nitratidesulfovibrio vulgaris (strain ATCC 29579 / DSM 644 / CCUG 34227 / NCIMB 8303 / VKM B-1760 / Hildenborough) (Desulfovibrio vulgaris).